An 84-amino-acid chain; its full sequence is MIMAAGSTGERPFFEIITSIRYWIIHAVTLPAIFIAGFLFVYTGLAYDAFGTPRPDSYFQASESKAPVVTQRYDAKSQLDLRTK.

The helical transmembrane segment at 24–38 (IIHAVTLPAIFIAGF) threads the bilayer. His26 is a binding site for heme.

Belongs to the PsbE/PsbF family. As to quaternary structure, heterodimer of an alpha subunit and a beta subunit. PSII is composed of 1 copy each of membrane proteins PsbA, PsbB, PsbC, PsbD, PsbE, PsbF, PsbH, PsbI, PsbJ, PsbK, PsbL, PsbM, PsbT, PsbX, PsbY, Psb30/Ycf12, peripheral proteins PsbO, CyanoQ (PsbQ), PsbU, PsbV and a large number of cofactors. It forms dimeric complexes. Heme b serves as cofactor.

The protein localises to the cellular thylakoid membrane. This b-type cytochrome is tightly associated with the reaction center of photosystem II (PSII). PSII is a light-driven water:plastoquinone oxidoreductase that uses light energy to abstract electrons from H(2)O, generating O(2) and a proton gradient subsequently used for ATP formation. It consists of a core antenna complex that captures photons, and an electron transfer chain that converts photonic excitation into a charge separation. This is Cytochrome b559 subunit alpha from Prochlorococcus marinus subsp. pastoris (strain CCMP1986 / NIES-2087 / MED4).